A 697-amino-acid chain; its full sequence is Polyribonucleotide nucleotidyltransferase (697 aa).

Mg(2+) contacts are provided by Asp-484 and Asp-490. The KH domain occupies 551–610 (PRITTIWVKTDKIRDVIGSGGKNIRGITEATGVSIDIEDSGRINIASTSKEACDKAIKMI). Residues 620 to 688 (GKLYMGTVKK…KQGKIKLSRK (69 aa)) form the S1 motif domain.

Belongs to the polyribonucleotide nucleotidyltransferase family. Mg(2+) is required as a cofactor.

It localises to the cytoplasm. The enzyme catalyses RNA(n+1) + phosphate = RNA(n) + a ribonucleoside 5'-diphosphate. Its function is as follows. Involved in mRNA degradation. Catalyzes the phosphorolysis of single-stranded polyribonucleotides processively in the 3'- to 5'-direction. This chain is Polyribonucleotide nucleotidyltransferase, found in Geobacter sulfurreducens (strain ATCC 51573 / DSM 12127 / PCA).